We begin with the raw amino-acid sequence, 328 residues long: Nickel import system permease protein NikB (328 aa).

A run of 6 helical transmembrane segments spans residues L11 to L31, L104 to I124, V139 to I159, I170 to I190, I229 to V249, and V279 to L299. Positions A100–T297 constitute an ABC transmembrane type-1 domain.

The protein belongs to the binding-protein-dependent transport system permease family. OppBC subfamily. As to quaternary structure, the complex is composed of two ATP-binding proteins (NikD and NikE), two transmembrane proteins (NikB and NikC) and a solute-binding protein (NikA).

The protein localises to the cell membrane. Part of the ABC transporter complex NikABCDE (Opp2) involved in nickel import. Probably responsible for the translocation of the substrate across the membrane. The polypeptide is Nickel import system permease protein NikB (Staphylococcus aureus (strain MRSA252)).